Reading from the N-terminus, the 199-residue chain is Adenylyl-sulfate kinase (199 aa).

34 to 41 (GLSGSGKS) lines the ATP pocket. Residue S108 is the Phosphoserine intermediate of the active site.

Belongs to the APS kinase family.

The catalysed reaction is adenosine 5'-phosphosulfate + ATP = 3'-phosphoadenylyl sulfate + ADP + H(+). The protein operates within sulfur metabolism; hydrogen sulfide biosynthesis; sulfite from sulfate: step 2/3. Functionally, catalyzes the synthesis of activated sulfate. The protein is Adenylyl-sulfate kinase of Oceanobacillus iheyensis (strain DSM 14371 / CIP 107618 / JCM 11309 / KCTC 3954 / HTE831).